The sequence spans 255 residues: Octanoyltransferase (255 aa).

In terms of domain architecture, BPL/LPL catalytic spans 54 to 238 (GDAAELVWLL…AFTEIFGATV (185 aa)). Substrate is bound by residues 92–99 (RGGQLTYH), 167–169 (AIG), and 180–182 (GIA). The Acyl-thioester intermediate role is filled by Cys198.

Belongs to the LipB family.

It is found in the cytoplasm. The enzyme catalyses octanoyl-[ACP] + L-lysyl-[protein] = N(6)-octanoyl-L-lysyl-[protein] + holo-[ACP] + H(+). It participates in protein modification; protein lipoylation via endogenous pathway; protein N(6)-(lipoyl)lysine from octanoyl-[acyl-carrier-protein]: step 1/2. In terms of biological role, catalyzes the transfer of endogenously produced octanoic acid from octanoyl-acyl-carrier-protein onto the lipoyl domains of lipoate-dependent enzymes. Lipoyl-ACP can also act as a substrate although octanoyl-ACP is likely to be the physiological substrate. The protein is Octanoyltransferase of Rhodopseudomonas palustris (strain HaA2).